Reading from the N-terminus, the 850-residue chain is Endoribonuclease ysh-1 (850 aa).

Positions 83, 85, 87, 88, 173, and 194 each coordinate Zn(2+). His442 (proton donor) is an active-site residue. His464 is a Zn(2+) binding site. Disordered regions lie at residues 685-708 (VKRS…PHSH) and 732-784 (SPIV…EQQL). Polar residues predominate over residues 744-754 (PTTKAITSPSE). Basic and acidic residues predominate over residues 755–766 (ETAKSSDVKSDA). Acidic residues predominate over residues 767–781 (DADASMDVSEEDEDE).

Belongs to the metallo-beta-lactamase superfamily. RNA-metabolizing metallo-beta-lactamase-like family. CPSF2/YSH1 subfamily.

It localises to the nucleus. In terms of biological role, component of the cleavage factor I (CF I) involved in pre-mRNA 3'-end processing. The protein is Endoribonuclease ysh-1 (ysh-1) of Neurospora crassa (strain ATCC 24698 / 74-OR23-1A / CBS 708.71 / DSM 1257 / FGSC 987).